Reading from the N-terminus, the 367-residue chain is DNA replication and repair protein RecF (367 aa).

30 to 37 (GANGSGKT) lines the ATP pocket.

This sequence belongs to the RecF family.

Its subcellular location is the cytoplasm. Functionally, the RecF protein is involved in DNA metabolism; it is required for DNA replication and normal SOS inducibility. RecF binds preferentially to single-stranded, linear DNA. It also seems to bind ATP. The protein is DNA replication and repair protein RecF of Pseudomonas savastanoi pv. phaseolicola (strain 1448A / Race 6) (Pseudomonas syringae pv. phaseolicola (strain 1448A / Race 6)).